Reading from the N-terminus, the 310-residue chain is Malate dehydrogenase (310 aa).

NAD(+)-binding positions include 7–12 and aspartate 32; that span reads GAGNVG. Arginine 81 and arginine 87 together coordinate substrate. NAD(+) is bound by residues asparagine 94 and 117–119; that span reads VSN. Substrate-binding residues include asparagine 119 and arginine 150. Histidine 174 functions as the Proton acceptor in the catalytic mechanism.

Belongs to the LDH/MDH superfamily. MDH type 3 family.

The catalysed reaction is (S)-malate + NAD(+) = oxaloacetate + NADH + H(+). Catalyzes the reversible oxidation of malate to oxaloacetate. This Pelodictyon phaeoclathratiforme (strain DSM 5477 / BU-1) protein is Malate dehydrogenase.